A 210-amino-acid polypeptide reads, in one-letter code: Thymidylate kinase (210 aa).

Position 10 to 17 (glycine 10 to serine 17) interacts with ATP.

The protein belongs to the thymidylate kinase family.

The enzyme catalyses dTMP + ATP = dTDP + ADP. In terms of biological role, phosphorylation of dTMP to form dTDP in both de novo and salvage pathways of dTTP synthesis. The polypeptide is Thymidylate kinase (Pseudomonas fluorescens (strain Pf0-1)).